The primary structure comprises 545 residues: Chaperonin GroEL 2 (545 aa).

ATP contacts are provided by residues 30–33 (TLGP), lysine 51, 87–91 (DGTTT), glycine 415, 479–481 (NAA), and aspartate 495.

Belongs to the chaperonin (HSP60) family. As to quaternary structure, forms a cylinder of 14 subunits composed of two heptameric rings stacked back-to-back. Interacts with the co-chaperonin GroES.

Its subcellular location is the cytoplasm. The enzyme catalyses ATP + H2O + a folded polypeptide = ADP + phosphate + an unfolded polypeptide.. Functionally, together with its co-chaperonin GroES, plays an essential role in assisting protein folding. The GroEL-GroES system forms a nano-cage that allows encapsulation of the non-native substrate proteins and provides a physical environment optimized to promote and accelerate protein folding. The protein is Chaperonin GroEL 2 of Escherichia coli O1:K1 / APEC.